The following is a 272-amino-acid chain: Iodotyrosine deiodinase (272 aa).

A helical transmembrane segment spans residues 5–25 (LSGVSYGLLAGILAMLIHLVY). Residues 82 to 86 (RRSVR), Ser110, and 110 to 111 (SG) contribute to the FMN site. Residues Ala112, Glu139, Tyr143, and Lys164 each contribute to the 3-iodo-L-tyrosine site. FMN is bound by residues 219-221 (TST) and Arg261.

Belongs to the nitroreductase family. It depends on FMN as a cofactor.

The protein localises to the membrane. The catalysed reaction is 2 iodide + L-tyrosine + 2 NADP(+) = 3,5-diiodo-L-tyrosine + 2 NADPH + H(+). It carries out the reaction iodide + L-tyrosine + NADP(+) = 3-iodo-L-tyrosine + NADPH. It catalyses the reaction 3-iodo-L-tyrosine + iodide + NADP(+) = 3,5-diiodo-L-tyrosine + NADPH + H(+). The enzyme catalyses L-tyrosine + chloride + NADP(+) = 3-chloro-L-tyrosine + NADPH. The catalysed reaction is bromide + L-tyrosine + NADP(+) = 3-bromo-L-tyrosine + NADPH. Its function is as follows. Catalyzes the dehalogenation of halotyrosines such as 3,5-diiodo-L-tyrosine. Likely to also catalyze the dehalogenation of other halotyrosines such as 3-bromo-L-tyrosine, 3-chloro-L-tyrosine and 3-iodo-L-tyrosine. The protein is Iodotyrosine deiodinase of Hydra vulgaris (Hydra).